Consider the following 308-residue polypeptide: Protoheme IX farnesyltransferase 2 (308 aa).

Helical transmembrane passes span 20–40, 47–67, 92–114, 118–137, 144–164, 174–194, 218–238, 240–260, and 275–295; these read VTKP…FLLA, AVLM…GCAI, IPLK…LLAW, LAAL…LYSL, VYGT…GYCA, LILL…IAIF, LHIV…PLAG, TGVG…LMAL, and QVFG…ALDF.

Belongs to the UbiA prenyltransferase family. Protoheme IX farnesyltransferase subfamily.

It localises to the cell inner membrane. The enzyme catalyses heme b + (2E,6E)-farnesyl diphosphate + H2O = Fe(II)-heme o + diphosphate. It functions in the pathway porphyrin-containing compound metabolism; heme O biosynthesis; heme O from protoheme: step 1/1. Its function is as follows. Converts heme B (protoheme IX) to heme O by substitution of the vinyl group on carbon 2 of heme B porphyrin ring with a hydroxyethyl farnesyl side group. This Shewanella loihica (strain ATCC BAA-1088 / PV-4) protein is Protoheme IX farnesyltransferase 2.